The sequence spans 261 residues: Thiazole synthase (261 aa).

The active-site Schiff-base intermediate with DXP is the Lys-101. 1-deoxy-D-xylulose 5-phosphate is bound by residues Gly-162, 188-189, and 210-211; these read AG and NT.

This sequence belongs to the ThiG family. Homotetramer. Forms heterodimers with either ThiH or ThiS.

It localises to the cytoplasm. It carries out the reaction [ThiS sulfur-carrier protein]-C-terminal-Gly-aminoethanethioate + 2-iminoacetate + 1-deoxy-D-xylulose 5-phosphate = [ThiS sulfur-carrier protein]-C-terminal Gly-Gly + 2-[(2R,5Z)-2-carboxy-4-methylthiazol-5(2H)-ylidene]ethyl phosphate + 2 H2O + H(+). It functions in the pathway cofactor biosynthesis; thiamine diphosphate biosynthesis. Catalyzes the rearrangement of 1-deoxy-D-xylulose 5-phosphate (DXP) to produce the thiazole phosphate moiety of thiamine. Sulfur is provided by the thiocarboxylate moiety of the carrier protein ThiS. In vitro, sulfur can be provided by H(2)S. In Azoarcus sp. (strain BH72), this protein is Thiazole synthase.